The chain runs to 789 residues: Polyribonucleotide nucleotidyltransferase (789 aa).

Mg(2+)-binding residues include D494 and D500. Positions 561 to 620 (PRIESIFINKDKIRNVIGSGGKNIREICEKTGARVEIMQDGTVMIYAINNDAVEYAKNMI) constitute a KH domain. The S1 motif domain occupies 630–697 (GKVFDGTVIE…DREYVQLSMR (68 aa)). The tract at residues 709–789 (GELYNIRKTN…NEVPRKPRFF (81 aa)) is disordered. Residues 737-749 (SEKKRRGSGRSRR) show a composition bias toward basic residues. Residues 763-780 (NNGFGNGNRSFNDNRNGN) are compositionally biased toward low complexity.

The protein belongs to the polyribonucleotide nucleotidyltransferase family. Mg(2+) serves as cofactor.

It localises to the cytoplasm. The enzyme catalyses RNA(n+1) + phosphate = RNA(n) + a ribonucleoside 5'-diphosphate. Its function is as follows. Involved in mRNA degradation. Catalyzes the phosphorolysis of single-stranded polyribonucleotides processively in the 3'- to 5'-direction. The sequence is that of Polyribonucleotide nucleotidyltransferase from Ehrlichia ruminantium (strain Gardel).